Reading from the N-terminus, the 109-residue chain is Nucleoid-associated protein ASA_2087 (109 aa).

Disordered stretches follow at residues 1–23 and 87–109; these read MFGK…RMQK and QSKS…KLPF. The span at 11–23 shows a compositional bias: low complexity; the sequence is MKQAQQMQERMQK.

Belongs to the YbaB/EbfC family. Homodimer.

Its subcellular location is the cytoplasm. It is found in the nucleoid. Binds to DNA and alters its conformation. May be involved in regulation of gene expression, nucleoid organization and DNA protection. The chain is Nucleoid-associated protein ASA_2087 from Aeromonas salmonicida (strain A449).